The sequence spans 353 residues: Holliday junction branch migration complex subunit RuvB (353 aa).

Residues 4–185 are large ATPase domain (RuvB-L); it reads ADRLITAAGG…FGIVQRLEFY (182 aa). Residues Ile24, Arg25, Gly66, Lys69, Thr70, Thr71, 132 to 134, Arg175, Tyr185, and Arg222 each bind ATP; that span reads EDF. Thr70 is a Mg(2+) binding site. Positions 186–256 are small ATPAse domain (RuvB-S); sequence NIADLSTIVS…TADKALNLLD (71 aa). The interval 259-353 is head domain (RuvB-H); the sequence is EHGFDHQDRR…DDVVDDPADL (95 aa). 3 residues coordinate DNA: Arg295, Arg314, and Arg319.

It belongs to the RuvB family. In terms of assembly, homohexamer. Forms an RuvA(8)-RuvB(12)-Holliday junction (HJ) complex. HJ DNA is sandwiched between 2 RuvA tetramers; dsDNA enters through RuvA and exits via RuvB. An RuvB hexamer assembles on each DNA strand where it exits the tetramer. Each RuvB hexamer is contacted by two RuvA subunits (via domain III) on 2 adjacent RuvB subunits; this complex drives branch migration. In the full resolvosome a probable DNA-RuvA(4)-RuvB(12)-RuvC(2) complex forms which resolves the HJ.

Its subcellular location is the cytoplasm. The catalysed reaction is ATP + H2O = ADP + phosphate + H(+). Its function is as follows. The RuvA-RuvB-RuvC complex processes Holliday junction (HJ) DNA during genetic recombination and DNA repair, while the RuvA-RuvB complex plays an important role in the rescue of blocked DNA replication forks via replication fork reversal (RFR). RuvA specifically binds to HJ cruciform DNA, conferring on it an open structure. The RuvB hexamer acts as an ATP-dependent pump, pulling dsDNA into and through the RuvAB complex. RuvB forms 2 homohexamers on either side of HJ DNA bound by 1 or 2 RuvA tetramers; 4 subunits per hexamer contact DNA at a time. Coordinated motions by a converter formed by DNA-disengaged RuvB subunits stimulates ATP hydrolysis and nucleotide exchange. Immobilization of the converter enables RuvB to convert the ATP-contained energy into a lever motion, pulling 2 nucleotides of DNA out of the RuvA tetramer per ATP hydrolyzed, thus driving DNA branch migration. The RuvB motors rotate together with the DNA substrate, which together with the progressing nucleotide cycle form the mechanistic basis for DNA recombination by continuous HJ branch migration. Branch migration allows RuvC to scan DNA until it finds its consensus sequence, where it cleaves and resolves cruciform DNA. This chain is Holliday junction branch migration complex subunit RuvB, found in Pseudomonas savastanoi pv. phaseolicola (strain 1448A / Race 6) (Pseudomonas syringae pv. phaseolicola (strain 1448A / Race 6)).